A 268-amino-acid chain; its full sequence is Tryptophan synthase alpha chain (268 aa).

Residues Glu49 and Asp60 each act as proton acceptor in the active site.

The protein belongs to the TrpA family. Tetramer of two alpha and two beta chains.

The enzyme catalyses (1S,2R)-1-C-(indol-3-yl)glycerol 3-phosphate + L-serine = D-glyceraldehyde 3-phosphate + L-tryptophan + H2O. Its pathway is amino-acid biosynthesis; L-tryptophan biosynthesis; L-tryptophan from chorismate: step 5/5. Functionally, the alpha subunit is responsible for the aldol cleavage of indoleglycerol phosphate to indole and glyceraldehyde 3-phosphate. This Haemophilus influenzae (strain 86-028NP) protein is Tryptophan synthase alpha chain.